Reading from the N-terminus, the 485-residue chain is uncharacterized protein (485 aa).

A run of 3 helical transmembrane segments spans residues 284 to 304 (LLAL…YPLF), 328 to 348 (LLDL…SFIK), and 353 to 373 (LALT…YNCL).

Belongs to the CBF/MAK21 family.

It localises to the membrane. This is an uncharacterized protein from Schizosaccharomyces pombe (strain 972 / ATCC 24843) (Fission yeast).